Here is a 513-residue protein sequence, read N- to C-terminus: Interferon-induced, double-stranded RNA-activated protein kinase (513 aa).

A2 is modified (N-acetylalanine). The DRBM 1 domain maps to F8–N76. A Glycyl lysine isopeptide (Lys-Gly) (interchain with G-Cter in ISG15) cross-link involves residue K68. Residue S82 is modified to Phosphoserine. At T84 the chain carries Phosphothreonine. The region spanning N95–E162 is the DRBM 2 domain. The residue at position 96 (Y96) is a Phosphotyrosine; by autocatalysis. Residue K154 forms a Glycyl lysine isopeptide (Lys-Gly) (interchain with G-Cter in ISG15) linkage. A Phosphotyrosine; by autocatalysis modification is found at Y157. At T227 the chain carries Phosphothreonine. The interval D235–C513 is interaction with TRAF5. The Protein kinase domain occupies F236–K502. Residue I242–V250 coordinates ATP. At Y262 the chain carries Phosphotyrosine; by autocatalysis. K265 serves as a coordination point for ATP. The active-site Proton acceptor is D373. 2 positions are modified to phosphothreonine; by autocatalysis: T406 and T411. S416 bears the Phosphoserine mark.

The protein belongs to the protein kinase superfamily. Ser/Thr protein kinase family. GCN2 subfamily. In terms of assembly, homodimer. Interacts with DNAJC3. Interacts with STRBP. Forms a complex with FANCA, FANCC, FANCG and HSP70. Interacts with ADAR/ADAR1. The inactive form interacts with NCK1 and GSN. Interacts (via the kinase catalytic domain) with STAT3 (via SH2 domain), TRAF2 (C-terminus), TRAF5 (C-terminus) and TRAF6 (C-terminus). Interacts with MAP2K6, IKBKB/IKKB, IRS1, NPM1, TARBP2, NLRP1, NLRP3, NLRC4 and AIM2. Interacts (via DRBM 1 domain) with DUS2L (via DRBM domain). Interacts with DHX9 (via N-terminus) and this interaction is dependent upon activation of the kinase. Autophosphorylated on several Ser, Thr and Tyr residues. Autophosphorylation of Thr-411 is dependent on Thr-406 and is stimulated by dsRNA binding and dimerization. Autophosphorylation apparently leads to the activation of the kinase. Tyrosine autophosphorylation is essential for efficient dsRNA-binding, dimerization, and kinase activation.

The protein resides in the cytoplasm. The protein localises to the nucleus. It is found in the perinuclear region. The catalysed reaction is L-seryl-[protein] + ATP = O-phospho-L-seryl-[protein] + ADP + H(+). It catalyses the reaction L-threonyl-[protein] + ATP = O-phospho-L-threonyl-[protein] + ADP + H(+). The enzyme catalyses L-tyrosyl-[protein] + ATP = O-phospho-L-tyrosyl-[protein] + ADP + H(+). With respect to regulation, initially produced in an inactive form and is activated by binding to viral dsRNA, which causes dimerization and autophosphorylation in the activation loop and stimulation of function. ISGylation can activate it in the absence of viral infection. Can also be activated by heparin, pro-inflammatory stimuli, growth factors, cytokines, oxidative stress and the cellular protein PRKRA. Activity is markedly stimulated by manganese ions. Activation is blocked by the cellular proteins TARBP2, DUS2L, NPM1, NCK1 and ADAR. Functionally, IFN-induced dsRNA-dependent serine/threonine-protein kinase that phosphorylates the alpha subunit of eukaryotic translation initiation factor 2 (EIF2S1/eIF-2-alpha) and plays a key role in the innate immune response to viral infection. Inhibits viral replication via the integrated stress response (ISR): EIF2S1/eIF-2-alpha phosphorylation in response to viral infection converts EIF2S1/eIF-2-alpha in a global protein synthesis inhibitor, resulting to a shutdown of cellular and viral protein synthesis, while concomitantly initiating the preferential translation of ISR-specific mRNAs, such as the transcriptional activator ATF4. Exerts its antiviral activity on a wide range of DNA and RNA viruses. Also involved in the regulation of signal transduction, apoptosis, cell proliferation and differentiation: phosphorylates other substrates including p53/TP53, PPP2R5A, DHX9, ILF3 and IRS1. In addition to serine/threonine-protein kinase activity, also has tyrosine-protein kinase activity and phosphorylates CDK1 at 'Tyr-4' upon DNA damage, facilitating its ubiquitination and proteasomal degradation. Either as an adapter protein and/or via its kinase activity, can regulate various signaling pathways (p38 MAP kinase, NF-kappa-B and insulin signaling pathways) and transcription factors (JUN, STAT1, STAT3, IRF1, ATF3) involved in the expression of genes encoding pro-inflammatory cytokines and IFNs. Activates the NF-kappa-B pathway via interaction with IKBKB and TRAF family of proteins and activates the p38 MAP kinase pathway via interaction with MAP2K6. Can act as both a positive and negative regulator of the insulin signaling pathway (ISP). Negatively regulates ISP by inducing the inhibitory phosphorylation of insulin receptor substrate 1 (IRS1) at 'Ser-312' and positively regulates ISP via phosphorylation of PPP2R5A which activates FOXO1, which in turn up-regulates the expression of insulin receptor substrate 2 (IRS2). Can regulate NLRP3 inflammasome assembly and the activation of NLRP3, NLRP1, AIM2 and NLRC4 inflammasomes. Plays a role in the regulation of the cytoskeleton by binding to gelsolin (GSN), sequestering the protein in an inactive conformation away from actin. The sequence is that of Interferon-induced, double-stranded RNA-activated protein kinase (Eif2ak2) from Rattus norvegicus (Rat).